A 205-amino-acid polypeptide reads, in one-letter code: Large ribosomal subunit protein uL4 (205 aa).

Residues 43–97 form a disordered region; sequence GKRQGTSKVKNRSAVRGGGKKPWRQKGTGRARQGSIRAPQWRGGGTVFGPTPRSY. Residues 51–71 show a composition bias toward basic residues; the sequence is VKNRSAVRGGGKKPWRQKGTG.

It belongs to the universal ribosomal protein uL4 family. As to quaternary structure, part of the 50S ribosomal subunit.

Functionally, one of the primary rRNA binding proteins, this protein initially binds near the 5'-end of the 23S rRNA. It is important during the early stages of 50S assembly. It makes multiple contacts with different domains of the 23S rRNA in the assembled 50S subunit and ribosome. In terms of biological role, forms part of the polypeptide exit tunnel. The protein is Large ribosomal subunit protein uL4 of Lactobacillus acidophilus (strain ATCC 700396 / NCK56 / N2 / NCFM).